The sequence spans 88 residues: UPF0250 protein Swoo_3713 (88 aa).

Belongs to the UPF0250 family.

This Shewanella woodyi (strain ATCC 51908 / MS32) protein is UPF0250 protein Swoo_3713.